A 62-amino-acid chain; its full sequence is Large ribosomal subunit protein bL28 (62 aa).

The protein belongs to the bacterial ribosomal protein bL28 family.

The chain is Large ribosomal subunit protein bL28 from Syntrophomonas wolfei subsp. wolfei (strain DSM 2245B / Goettingen).